The primary structure comprises 286 residues: Formyltetrahydrofolate deformylase (286 aa).

The ACT domain occupies 8-88; it reads VLTLQCPEGI…MDWQLRERGQ (81 aa). Asp-230 is an active-site residue.

The protein belongs to the PurU family.

It catalyses the reaction (6R)-10-formyltetrahydrofolate + H2O = (6S)-5,6,7,8-tetrahydrofolate + formate + H(+). Its pathway is purine metabolism; IMP biosynthesis via de novo pathway; formate from 10-formyl-5,6,7,8-tetrahydrofolate: step 1/1. Catalyzes the hydrolysis of 10-formyltetrahydrofolate (formyl-FH4) to formate and tetrahydrofolate (FH4). This is Formyltetrahydrofolate deformylase from Corynebacterium sp. (strain P-1).